We begin with the raw amino-acid sequence, 428 residues long: ORC1-type DNA replication protein 5 (428 aa).

Residues 62–66, Tyr219, and Arg231 contribute to the ATP site; that span reads TGKSL.

The protein belongs to the CDC6/cdc18 family.

Involved in regulation of DNA replication. This Halobacterium salinarum (strain ATCC 700922 / JCM 11081 / NRC-1) (Halobacterium halobium) protein is ORC1-type DNA replication protein 5 (orc5).